A 430-amino-acid chain; its full sequence is Endo-beta-1,4-glucanase celB (430 aa).

An N-terminal signal peptide occupies residues 1–16 (MALLLSLSLLATTISA). Residues asparagine 43 and asparagine 153 are each glycosylated (N-linked (GlcNAc...) asparagine). Glutamate 216 functions as the Nucleophile in the catalytic mechanism. The active-site Proton donor is the glutamate 221. N-linked (GlcNAc...) asparagine glycosylation is present at asparagine 395.

This sequence belongs to the glycosyl hydrolase 7 (cellulase C) family.

The protein resides in the secreted. The catalysed reaction is Endohydrolysis of (1-&gt;4)-beta-D-glucosidic linkages in cellulose, lichenin and cereal beta-D-glucans.. Functionally, has endoglucanase activity on substrates containing beta-1,4 glycosidic bonds, like in carboxymethylcellulose (CMC), hydroxyethylcellulose (HEC) and beta-glucan. Involved in the degradation of complex natural cellulosic substrates. This Emericella nidulans (strain FGSC A4 / ATCC 38163 / CBS 112.46 / NRRL 194 / M139) (Aspergillus nidulans) protein is Endo-beta-1,4-glucanase celB (celB).